Consider the following 139-residue polypeptide: Putative nickel-responsive regulator (139 aa).

Histidine 79, histidine 90, histidine 92, and cysteine 98 together coordinate Ni(2+).

This sequence belongs to the transcriptional regulatory CopG/NikR family. It depends on Ni(2+) as a cofactor.

Functionally, transcriptional regulator. This is Putative nickel-responsive regulator from Anaeromyxobacter dehalogenans (strain 2CP-C).